The sequence spans 339 residues: Dihydroorotase (339 aa).

The Zn(2+) site is built by histidine 12 and histidine 14. Substrate contacts are provided by residues 14–16 and asparagine 40; that span reads HVR. Residues lysine 94, histidine 133, histidine 167, and aspartate 239 each contribute to the Zn(2+) site. N6-carboxylysine is present on lysine 94. Residue histidine 133 participates in substrate binding. The active site involves aspartate 239. Residues histidine 243 and alanine 255 each coordinate substrate.

Belongs to the metallo-dependent hydrolases superfamily. DHOase family. Class II DHOase subfamily. As to quaternary structure, homodimer. Zn(2+) serves as cofactor.

The catalysed reaction is (S)-dihydroorotate + H2O = N-carbamoyl-L-aspartate + H(+). Its pathway is pyrimidine metabolism; UMP biosynthesis via de novo pathway; (S)-dihydroorotate from bicarbonate: step 3/3. In terms of biological role, catalyzes the reversible cyclization of carbamoyl aspartate to dihydroorotate. This is Dihydroorotase from Helicobacter pylori (strain G27).